The following is a 295-amino-acid chain: Diaminopimelate epimerase (295 aa).

The substrate site is built by Asn-13, Gln-46, and Asn-66. Cys-75 serves as the catalytic Proton donor. Substrate contacts are provided by residues 76–77 (GN), Asn-162, Asn-195, and 213–214 (ER). Cys-222 (proton acceptor) is an active-site residue. 223-224 (GT) serves as a coordination point for substrate.

Belongs to the diaminopimelate epimerase family. In terms of assembly, homodimer.

Its subcellular location is the cytoplasm. It carries out the reaction (2S,6S)-2,6-diaminopimelate = meso-2,6-diaminopimelate. Its pathway is amino-acid biosynthesis; L-lysine biosynthesis via DAP pathway; DL-2,6-diaminopimelate from LL-2,6-diaminopimelate: step 1/1. Functionally, catalyzes the stereoinversion of LL-2,6-diaminopimelate (L,L-DAP) to meso-diaminopimelate (meso-DAP), a precursor of L-lysine and an essential component of the bacterial peptidoglycan. This Psychrobacter cryohalolentis (strain ATCC BAA-1226 / DSM 17306 / VKM B-2378 / K5) protein is Diaminopimelate epimerase.